A 143-amino-acid chain; its full sequence is FAD synthase (143 aa).

ATP-binding positions include 13-14 (TF), 18-21 (HPGH), and Asp-96.

It belongs to the archaeal FAD synthase family. In terms of assembly, homodimer. A divalent metal cation is required as a cofactor.

The enzyme catalyses FMN + ATP + H(+) = FAD + diphosphate. The protein operates within cofactor biosynthesis; FAD biosynthesis; FAD from FMN: step 1/1. Functionally, catalyzes the transfer of the AMP portion of ATP to flavin mononucleotide (FMN) to produce flavin adenine dinucleotide (FAD) coenzyme. In Methanothrix thermoacetophila (strain DSM 6194 / JCM 14653 / NBRC 101360 / PT) (Methanosaeta thermophila), this protein is FAD synthase.